Reading from the N-terminus, the 476-residue chain is Argininosuccinate lyase (476 aa).

The protein belongs to the lyase 1 family. Argininosuccinate lyase subfamily.

It is found in the cytoplasm. The enzyme catalyses 2-(N(omega)-L-arginino)succinate = fumarate + L-arginine. The protein operates within amino-acid biosynthesis; L-arginine biosynthesis; L-arginine from L-ornithine and carbamoyl phosphate: step 3/3. In Gluconacetobacter diazotrophicus (strain ATCC 49037 / DSM 5601 / CCUG 37298 / CIP 103539 / LMG 7603 / PAl5), this protein is Argininosuccinate lyase.